Consider the following 132-residue polypeptide: Glycine cleavage system H protein (132 aa).

In terms of domain architecture, Lipoyl-binding spans 27 to 109 (FATIGISAFA…FDFGWILKVK (83 aa)). Lys68 is modified (N6-lipoyllysine).

This sequence belongs to the GcvH family. The glycine cleavage system is composed of four proteins: P, T, L and H. Requires (R)-lipoate as cofactor.

The glycine cleavage system catalyzes the degradation of glycine. The H protein shuttles the methylamine group of glycine from the P protein to the T protein. In Rhodopirellula baltica (strain DSM 10527 / NCIMB 13988 / SH1), this protein is Glycine cleavage system H protein.